Here is an 81-residue protein sequence, read N- to C-terminus: Thrombin-like enzyme collinein-3 (81 aa).

Asp4 is an active-site residue. Residues Cys51 and Cys68 are joined by a disulfide bond.

Monomer. Expressed by the vanom gland.

It is found in the secreted. In terms of biological role, thrombin-like snake venom serine protease. The polypeptide is Thrombin-like enzyme collinein-3 (Crotalus durissus collilineatus (Brazilian rattlesnake)).